The sequence spans 306 residues: UDP-3-O-acyl-N-acetylglucosamine deacetylase (306 aa).

Residues His-79, His-238, and Asp-242 each coordinate Zn(2+). His-265 acts as the Proton donor in catalysis.

The protein belongs to the LpxC family. It depends on Zn(2+) as a cofactor.

It catalyses the reaction a UDP-3-O-[(3R)-3-hydroxyacyl]-N-acetyl-alpha-D-glucosamine + H2O = a UDP-3-O-[(3R)-3-hydroxyacyl]-alpha-D-glucosamine + acetate. It functions in the pathway glycolipid biosynthesis; lipid IV(A) biosynthesis; lipid IV(A) from (3R)-3-hydroxytetradecanoyl-[acyl-carrier-protein] and UDP-N-acetyl-alpha-D-glucosamine: step 2/6. Its function is as follows. Catalyzes the hydrolysis of UDP-3-O-myristoyl-N-acetylglucosamine to form UDP-3-O-myristoylglucosamine and acetate, the committed step in lipid A biosynthesis. This Shewanella pealeana (strain ATCC 700345 / ANG-SQ1) protein is UDP-3-O-acyl-N-acetylglucosamine deacetylase.